The primary structure comprises 247 residues: uncharacterized protein (247 aa).

The region spanning 70-205 (ISLWMGPGNN…QKVPLEIMIR (136 aa)) is the N-acetyltransferase domain.

Belongs to the acetyltransferase family.

It localises to the endoplasmic reticulum. The protein localises to the golgi apparatus. Its subcellular location is the vacuole. This is an uncharacterized protein from Schizosaccharomyces pombe (strain 972 / ATCC 24843) (Fission yeast).